The following is a 96-amino-acid chain: Putative septation protein SpoVG (96 aa).

This sequence belongs to the SpoVG family.

Could be involved in septation. This Clostridium kluyveri (strain ATCC 8527 / DSM 555 / NBRC 12016 / NCIMB 10680 / K1) protein is Putative septation protein SpoVG.